A 147-amino-acid polypeptide reads, in one-letter code: MVHLTPEEKSAVTALWGKVNVDEVGGEALGRLLVVYPWTQRFFESFGDLSTPDAVMGNPKVKAHGKKVLGAFSDGLAHLDNLKGTFATLSELHCDKLHVDPENFRLLGNVLVCVLAHHFGKEFTPPVQAAYQKVVAGVANALAHKYH.

N-acetylvaline is present on valine 2. The 145-residue stretch at 3–147 (HLTPEEKSAV…VANALAHKYH (145 aa)) folds into the Globin domain. At threonine 13 the chain carries Phosphothreonine. Serine 45 is subject to Phosphoserine. Residue lysine 60 is modified to N6-acetyllysine. Residue histidine 64 participates in heme b binding. Lysine 83 carries the post-translational modification N6-acetyllysine. Histidine 93 contributes to the heme b binding site. Cysteine 94 is modified (S-nitrosocysteine). Residue lysine 145 is modified to N6-acetyllysine.

This sequence belongs to the globin family. Heterotetramer of two alpha chains and two beta chains in adult hemoglobin A (HbA). As to expression, red blood cells.

Involved in oxygen transport from the lung to the various peripheral tissues. The polypeptide is Hemoglobin subunit beta (HBB) (Pan paniscus (Pygmy chimpanzee)).